Consider the following 567-residue polypeptide: MSSGLKTQTTIDILHDHSVESSSDHLYILKQQQQHQHEDTDSPKKKKLRHQCEETSQYIVPSLNDEVDDLGHHHLHHHHVNNINNSLLKQGLSALSSLSASSTSSISPSSSQSSSPLKQSERSIATSIDSMNDSTSSSSSSNNNNNFSSVPSHNIYTPSCLLSNLNNDTDSIIPNMNGSTDGDGGDIRREKVDENDEEVLCNDNHLSKDNEQEDNMVSFLNESNEEVIQTNNNNNNDNNNSSNICINNFCNINNNQQQQQQQQQQQQNNVNSSIILEDSNKENKTESNNSNSNSNSSPSFFHNLQQHPTSAATTTTTTTTTITTTSATTSIIIKEDNSDDEIDDECDDESEEEEEDEEEFNPFLFIKQLANATTMPPPVALPPKEHSSPKISLVLDLDETLVHCSTEPLEQPHLTFPVFFNNTEYQVFAKKRPFFEEFLHKVSDIFEVIIFTASQEVYANKLLNMIDPNNKIKYRLYRDSCVYVDGNYLKDLSVLGRDLKQVVIIDNSPQSFGFQVDNGIPIESWFEDENDKELLQLVPFLESLTNVEDVRPHIRDKFKLYQLISQA.

Disordered stretches follow at residues 31-53 (QQQQ…HQCE), 100-150 (ASST…FSSV), and 280-361 (NKEN…EEFN). Composition is skewed to low complexity over residues 100–118 (ASST…SPLK), 130–150 (SMND…FSSV), and 286–297 (ESNNSNSNSNSS). Residues 298 to 308 (PSFFHNLQQHP) are compositionally biased toward polar residues. Over residues 309–332 (TSAATTTTTTTTTITTTSATTSII) the composition is skewed to low complexity. The segment covering 337 to 360 (NSDDEIDDECDDESEEEEEDEEEF) has biased composition (acidic residues). The FCP1 homology domain occupies 386–544 (HSSPKISLVL…LQLVPFLESL (159 aa)).

Belongs to the CTDSPL2 family.

In terms of biological role, probable phosphatase. This is CTD small phosphatase-like protein 2 (ctdspl2) from Dictyostelium discoideum (Social amoeba).